The sequence spans 389 residues: MPAAFPVTAATPAGAEALDRLRHWPGEHRVAVGLSGGVDSSLTAALLVEAGWEVEGLTLWLMSGKGACCAEGLVDAAGICEQLEIPHHVVDSRDTFQREIVNGLIEGYQAGITPLPCSRCNRAVKFSPMLQWAQEKRGLARIATGHYARLRFDETTGRWRLLRGLDARKDQSYFLYDLTQEVLARVVFPLGELTKPDTRLEAARHGLRTAAKPESQDLCLADHHGSMRAFLDAYLPPRQGEIVLQDGTVVGEHDGIEHFTIGQRKGLGVAWSEPLHVVRLDAAMNRVVVATRDQAGRSHCVVGAINWVSMAPPAPEHSQMVQVQVRYRSAPVPARLTTMTAEASDAAAERPHRCRLDFDEPQFSITPGQAAVFYDGDAVLGGGLIQTSA.

ATP is bound by residues 33 to 40 (GLSGGVDS) and L59. Catalysis depends on C120, which acts as the Nucleophile. A disulfide bond links C120 and C219. G145 is a binding site for ATP. Residues 169-171 (KDQ) are interaction with tRNA. Catalysis depends on C219, which acts as the Cysteine persulfide intermediate. Residues 326–327 (RY) are interaction with tRNA.

Belongs to the MnmA/TRMU family.

It is found in the cytoplasm. It carries out the reaction S-sulfanyl-L-cysteinyl-[protein] + uridine(34) in tRNA + AH2 + ATP = 2-thiouridine(34) in tRNA + L-cysteinyl-[protein] + A + AMP + diphosphate + H(+). In terms of biological role, catalyzes the 2-thiolation of uridine at the wobble position (U34) of tRNA, leading to the formation of s(2)U34. This chain is tRNA-specific 2-thiouridylase MnmA, found in Synechococcus sp. (strain WH7803).